The chain runs to 418 residues: D-inositol 3-phosphate glycosyltransferase (418 aa).

Histidine 9 contacts 1D-myo-inositol 3-phosphate. UDP-N-acetyl-alpha-D-glucosamine-binding positions include 15–16 (QP) and glycine 23. 1D-myo-inositol 3-phosphate is bound by residues 20–25 (DSGGMN), lysine 78, tyrosine 110, threonine 134, and arginine 154. The UDP-N-acetyl-alpha-D-glucosamine site is built by arginine 231, lysine 236, and arginine 294. 3 residues coordinate Mg(2+): tyrosine 303, arginine 304, and alanine 306. Residues glutamate 316 and glutamate 324 each contribute to the UDP-N-acetyl-alpha-D-glucosamine site. Threonine 330 is a Mg(2+) binding site.

This sequence belongs to the glycosyltransferase group 1 family. MshA subfamily. Homodimer.

The enzyme catalyses 1D-myo-inositol 3-phosphate + UDP-N-acetyl-alpha-D-glucosamine = 1D-myo-inositol 2-acetamido-2-deoxy-alpha-D-glucopyranoside 3-phosphate + UDP + H(+). Its function is as follows. Catalyzes the transfer of a N-acetyl-glucosamine moiety to 1D-myo-inositol 3-phosphate to produce 1D-myo-inositol 2-acetamido-2-deoxy-glucopyranoside 3-phosphate in the mycothiol biosynthesis pathway. The protein is D-inositol 3-phosphate glycosyltransferase of Corynebacterium glutamicum (strain R).